The sequence spans 434 residues: Beta-enolase (434 aa).

Alanine 2 carries the N-acetylalanine modification. Threonine 72 is subject to Phosphothreonine. Phosphoserine occurs at positions 83 and 157. Substrate is bound by residues histidine 158 and glutamate 167. A Phosphoserine modification is found at serine 176. At threonine 205 the chain carries Phosphothreonine. The Proton donor role is filled by glutamate 210. Position 229 is a phosphothreonine (threonine 229). Position 236 is a phosphotyrosine (tyrosine 236). Position 245 (aspartate 245) interacts with Mg(2+). The residue at position 263 (serine 263) is a Phosphoserine. Glutamate 293 and aspartate 318 together coordinate substrate. Positions 293 and 318 each coordinate Mg(2+). Residue lysine 343 is the Proton acceptor of the active site. Substrate is bound by residues 370 to 373 (SHRS) and lysine 394.

The protein belongs to the enolase family. Mammalian enolase is composed of 3 isozyme subunits, alpha, beta and gamma, which can form homodimers or heterodimers which are cell-type and development-specific. Interacts with PNKD. Mg(2+) serves as cofactor. In terms of tissue distribution, the alpha/alpha homodimer is expressed in embryo and in most adult tissues. The alpha/beta heterodimer and the beta/beta homodimer are found in striated muscle, and the alpha/gamma heterodimer and the gamma/gamma homodimer in neurons.

It is found in the cytoplasm. The catalysed reaction is (2R)-2-phosphoglycerate = phosphoenolpyruvate + H2O. It functions in the pathway carbohydrate degradation; glycolysis; pyruvate from D-glyceraldehyde 3-phosphate: step 4/5. Its function is as follows. Glycolytic enzyme that catalyzes the conversion of 2-phosphoglycerate to phosphoenolpyruvate. Appears to have a function in striated muscle development and regeneration. This chain is Beta-enolase (Eno3), found in Rattus norvegicus (Rat).